We begin with the raw amino-acid sequence, 236 residues long: Small ribosomal subunit protein uS3 (236 aa).

A KH type-2 domain is found at isoleucine 39 to arginine 107. A disordered region spans residues methionine 213–alanine 236.

It belongs to the universal ribosomal protein uS3 family. Part of the 30S ribosomal subunit. Forms a tight complex with proteins S10 and S14.

Functionally, binds the lower part of the 30S subunit head. Binds mRNA in the 70S ribosome, positioning it for translation. The sequence is that of Small ribosomal subunit protein uS3 from Bradyrhizobium sp. (strain BTAi1 / ATCC BAA-1182).